Here is a 402-residue protein sequence, read N- to C-terminus: UPF0261 protein mll9388 (402 aa).

It belongs to the UPF0261 family.

The sequence is that of UPF0261 protein mll9388 from Mesorhizobium japonicum (strain LMG 29417 / CECT 9101 / MAFF 303099) (Mesorhizobium loti (strain MAFF 303099)).